Here is a 402-residue protein sequence, read N- to C-terminus: La-related protein 7 homolog (402 aa).

The tract at residues E64–R138 is HTH La-type RNA-binding-like region. An RRM-like region region spans residues I148 to E230. The xRRM-like region stretch occupies residues D288–L400. The region spanning D288–K402 is the xRRM domain.

The protein belongs to the LARP7 family. In terms of assembly, component of the telomerase holoenzyme complex composed minimally of trt1 and the telomerase RNA template component. Interacts with skp1.

It localises to the chromosome. The protein localises to the telomere. It is found in the nucleus. The protein resides in the cytoplasm. Its function is as follows. RNA-binding protein required for assembly of the holoenzyme telomerase ribonucleoprotein (RNP) complex. Specifically binds telomerase RNA ter1 and promotes assembly of ter1 with catalytic subunit trt1. Telomerase is a ribonucleoprotein enzyme essential that copies new telomeric repeats onto chromosome ends and functions to maintain cell division. The polypeptide is La-related protein 7 homolog (Schizosaccharomyces pombe (strain 972 / ATCC 24843) (Fission yeast)).